Consider the following 217-residue polypeptide: MKMSCTIEKALADAKALVERLREHDNAAEALIEQTTALNKRVEAMKQYQEEIQELNEVARHRPRSTLVMGIQQENRQIRELQQENKELRTSLEEHQSALELIMSKYREQMFRLLMASKKDDPSIIMKLKEQHSKELQVHVDQITEMAAVMRKAIEIDDKHGCKEQERIIQLEQENKGLREILQITRESFLNLKKEDASESTSLSGLVTSSDLSLRKS.

2 coiled-coil regions span residues 6–106 (TIEK…MSKY) and 163–188 (KEQERIIQLEQENKGLREILQITRES). Residues 194 to 217 (KEDASESTSLSGLVTSSDLSLRKS) form a disordered region. The segment covering 199 to 217 (ESTSLSGLVTSSDLSLRKS) has biased composition (polar residues).

This sequence belongs to the SIKE family.

It is found in the cytoplasm. The polypeptide is FGFR1 oncogene partner 2 homolog (FGFR1OP2) (Gallus gallus (Chicken)).